We begin with the raw amino-acid sequence, 231 residues long: 5'-methylthioadenosine/S-adenosylhomocysteine nucleosidase (231 aa).

Glu-12 acts as the Proton acceptor in catalysis. Residues Gly-78, Met-153, and 174-175 each bind substrate; that span reads ME. The active-site Proton donor is Asp-198.

This sequence belongs to the PNP/UDP phosphorylase family. MtnN subfamily.

It carries out the reaction S-adenosyl-L-homocysteine + H2O = S-(5-deoxy-D-ribos-5-yl)-L-homocysteine + adenine. The enzyme catalyses S-methyl-5'-thioadenosine + H2O = 5-(methylsulfanyl)-D-ribose + adenine. It catalyses the reaction 5'-deoxyadenosine + H2O = 5-deoxy-D-ribose + adenine. It functions in the pathway amino-acid biosynthesis; L-methionine biosynthesis via salvage pathway; S-methyl-5-thio-alpha-D-ribose 1-phosphate from S-methyl-5'-thioadenosine (hydrolase route): step 1/2. Functionally, catalyzes the irreversible cleavage of the glycosidic bond in both 5'-methylthioadenosine (MTA) and S-adenosylhomocysteine (SAH/AdoHcy) to adenine and the corresponding thioribose, 5'-methylthioribose and S-ribosylhomocysteine, respectively. Also cleaves 5'-deoxyadenosine, a toxic by-product of radical S-adenosylmethionine (SAM) enzymes, into 5-deoxyribose and adenine. This is 5'-methylthioadenosine/S-adenosylhomocysteine nucleosidase from Bacillus cytotoxicus (strain DSM 22905 / CIP 110041 / 391-98 / NVH 391-98).